We begin with the raw amino-acid sequence, 250 residues long: 2,3-bisphosphoglycerate-dependent phosphoglycerate mutase (250 aa).

Residues 10–17 (RHGESQWN), 23–24 (TG), R62, 89–92 (ERHY), K100, 116–117 (RR), and 185–186 (GN) each bind substrate. H11 (tele-phosphohistidine intermediate) is an active-site residue. The active-site Proton donor/acceptor is the E89.

It belongs to the phosphoglycerate mutase family. BPG-dependent PGAM subfamily. Homodimer.

The catalysed reaction is (2R)-2-phosphoglycerate = (2R)-3-phosphoglycerate. Its pathway is carbohydrate degradation; glycolysis; pyruvate from D-glyceraldehyde 3-phosphate: step 3/5. Its function is as follows. Catalyzes the interconversion of 2-phosphoglycerate and 3-phosphoglycerate. The sequence is that of 2,3-bisphosphoglycerate-dependent phosphoglycerate mutase from Salmonella dublin (strain CT_02021853).